The sequence spans 335 residues: Methylthioribose-1-phosphate isomerase (335 aa).

Residues 47 to 49, arginine 81, and glutamine 184 each bind substrate; that span reads RGA. The active-site Proton donor is the aspartate 225. 235–236 contacts substrate; sequence NK.

The protein belongs to the eIF-2B alpha/beta/delta subunits family. MtnA subfamily.

It carries out the reaction 5-(methylsulfanyl)-alpha-D-ribose 1-phosphate = 5-(methylsulfanyl)-D-ribulose 1-phosphate. It functions in the pathway amino-acid biosynthesis; L-methionine biosynthesis via salvage pathway; L-methionine from S-methyl-5-thio-alpha-D-ribose 1-phosphate: step 1/6. In terms of biological role, catalyzes the interconversion of methylthioribose-1-phosphate (MTR-1-P) into methylthioribulose-1-phosphate (MTRu-1-P). This Synechococcus sp. (strain CC9902) protein is Methylthioribose-1-phosphate isomerase.